Reading from the N-terminus, the 61-residue chain is Small ribosomal subunit protein uS14B (61 aa).

Residues Cys24, Cys27, Cys40, and Cys43 each coordinate Zn(2+).

It belongs to the universal ribosomal protein uS14 family. Zinc-binding uS14 subfamily. In terms of assembly, part of the 30S ribosomal subunit. Contacts proteins S3 and S10. Requires Zn(2+) as cofactor.

Binds 16S rRNA, required for the assembly of 30S particles and may also be responsible for determining the conformation of the 16S rRNA at the A site. In Kineococcus radiotolerans (strain ATCC BAA-149 / DSM 14245 / SRS30216), this protein is Small ribosomal subunit protein uS14B.